An 865-amino-acid polypeptide reads, in one-letter code: Valine--tRNA ligase (865 aa).

The 'HIGH' region signature appears at 43 to 53 (PNITGRIHMGH). The 'KMSKS' region signature appears at 523–527 (KMSKS). Residue Lys526 participates in ATP binding. Residues 797–865 (GLIDFEKEKE…RLESILRDLE (69 aa)) are a coiled coil.

The protein belongs to the class-I aminoacyl-tRNA synthetase family. ValS type 1 subfamily. Monomer.

The protein resides in the cytoplasm. The catalysed reaction is tRNA(Val) + L-valine + ATP = L-valyl-tRNA(Val) + AMP + diphosphate. Catalyzes the attachment of valine to tRNA(Val). As ValRS can inadvertently accommodate and process structurally similar amino acids such as threonine, to avoid such errors, it has a 'posttransfer' editing activity that hydrolyzes mischarged Thr-tRNA(Val) in a tRNA-dependent manner. The sequence is that of Valine--tRNA ligase from Thermotoga maritima (strain ATCC 43589 / DSM 3109 / JCM 10099 / NBRC 100826 / MSB8).